A 536-amino-acid polypeptide reads, in one-letter code: Phosphoenolpyruvate carboxykinase (ATP) (536 aa).

Positions 61, 195, and 201 each coordinate substrate. ATP contacts are provided by residues lysine 201, histidine 220, and 236–244 (GLSGTGKTT). Mn(2+) contacts are provided by lysine 201 and histidine 220. Aspartate 257 lines the Mn(2+) pocket. Glutamate 285, arginine 322, and threonine 447 together coordinate ATP. Arginine 322 serves as a coordination point for substrate.

The protein belongs to the phosphoenolpyruvate carboxykinase (ATP) family. It depends on Mn(2+) as a cofactor.

The protein resides in the cytoplasm. It carries out the reaction oxaloacetate + ATP = phosphoenolpyruvate + ADP + CO2. It functions in the pathway carbohydrate biosynthesis; gluconeogenesis. Its function is as follows. Involved in the gluconeogenesis. Catalyzes the conversion of oxaloacetate (OAA) to phosphoenolpyruvate (PEP) through direct phosphoryl transfer between the nucleoside triphosphate and OAA. This chain is Phosphoenolpyruvate carboxykinase (ATP), found in Brucella melitensis biotype 1 (strain ATCC 23456 / CCUG 17765 / NCTC 10094 / 16M).